A 63-amino-acid polypeptide reads, in one-letter code: Anionic peptide NDBP7 (63 aa).

The N-terminal stretch at 1–20 (MISRFCLLFLLVFVVSKIQA) is a signal peptide.

It belongs to the non-disulfide-bridged peptide (NDBP) superfamily. Long chain multifunctional peptide (group 2) family. As to expression, expressed by the venom gland.

The protein localises to the secreted. The sequence is that of Anionic peptide NDBP7 from Lychas mucronatus (Chinese swimming scorpion).